A 203-amino-acid polypeptide reads, in one-letter code: Endo-type membrane-bound lytic murein transglycosylase A (203 aa).

A signal peptide spans 1 to 15 (MKLRWFAFLIVLLAG). Cys-16 carries N-palmitoyl cysteine lipidation. Cys-16 carries the S-diacylglycerol cysteine lipid modification.

The protein belongs to the transglycosylase Slt family.

It is found in the cell outer membrane. It carries out the reaction Endolytic cleavage of the (1-&gt;4)-beta-glycosidic linkage between N-acetylmuramic acid (MurNAc) and N-acetylglucosamine (GlcNAc) residues in peptidoglycan with concomitant formation of a 1,6-anhydrobond in the MurNAc residue.. Murein-degrading enzyme. May play a role in recycling of muropeptides during cell elongation and/or cell division. Preferentially cleaves at a distance of more than two disaccharide units from the ends of the glycan chain. This Escherichia coli O1:K1 / APEC protein is Endo-type membrane-bound lytic murein transglycosylase A.